Consider the following 490-residue polypeptide: AP-5 complex subunit mu-1 (490 aa).

An MHD domain is found at 206-476 (KPQVSISITE…LISSDYYIWN (271 aa)).

This sequence belongs to the adaptor complexes medium subunit family. In terms of assembly, probably part of the adaptor protein complex 5 (AP-5) a tetramer composed of AP5B1, AP5M1, AP5S1 and AP5Z1. Expressed in various tumor cell lines including Jurkat, Hep-G2 and HeLa.

It localises to the cytoplasm. The protein resides in the cytosol. The protein localises to the late endosome membrane. It is found in the lysosome membrane. As part of AP-5, a probable fifth adaptor protein complex it may be involved in endosomal transport. According to PubMed:18395520, it may play a role in cell death. The chain is AP-5 complex subunit mu-1 (AP5M1) from Homo sapiens (Human).